Consider the following 274-residue polypeptide: Pyrogallol hydroxytransferase small subunit (274 aa).

[4Fe-4S] cluster contacts are provided by Cys-13, Cys-16, Cys-19, Cys-23, Cys-68, Cys-71, Cys-76, Cys-109, Cys-126, Cys-129, Cys-145, and Cys-149.

Heterodimer of a large and a small subunit. The cofactor is [4Fe-4S] cluster.

The enzyme catalyses 1,2,3,5-tetrahydroxybenzene + 1,2,3-trihydroxybenzene = 1,2,3,5-tetrahydroxybenzene + 1,3,5-trihydroxybenzene. In terms of biological role, isomerization of pyrogallol to phloroglucin. The chain is Pyrogallol hydroxytransferase small subunit (bthL) from Pelobacter acidigallici.